The sequence spans 122 residues: Large ribosomal subunit protein uL14 (122 aa).

This sequence belongs to the universal ribosomal protein uL14 family. As to quaternary structure, part of the 50S ribosomal subunit. Forms a cluster with proteins L3 and L19. In the 70S ribosome, L14 and L19 interact and together make contacts with the 16S rRNA in bridges B5 and B8.

In terms of biological role, binds to 23S rRNA. Forms part of two intersubunit bridges in the 70S ribosome. This chain is Large ribosomal subunit protein uL14, found in Acaryochloris marina (strain MBIC 11017).